The following is a 333-amino-acid chain: Mevalonate kinase (333 aa).

109–119 (PVGAGLGSSAA) is an ATP binding site. The active-site Proton acceptor is the Asp160.

It belongs to the GHMP kinase family. Mevalonate kinase subfamily. Homodimer. It depends on Mg(2+) as a cofactor.

Its subcellular location is the cytoplasm. The catalysed reaction is (R)-mevalonate + ATP = (R)-5-phosphomevalonate + ADP + H(+). It participates in isoprenoid biosynthesis; isopentenyl diphosphate biosynthesis via mevalonate pathway; isopentenyl diphosphate from (R)-mevalonate: step 1/3. Its function is as follows. Catalyzes the phosphorylation of (R)-mevalonate (MVA) to (R)-mevalonate 5-phosphate (MVAP). Functions in the mevalonate (MVA) pathway leading to isopentenyl diphosphate (IPP), a key precursor for the biosynthesis of isoprenoid compounds such as archaeal membrane lipids. The sequence is that of Mevalonate kinase from Thermococcus sibiricus (strain DSM 12597 / MM 739).